Consider the following 281-residue polypeptide: Phosphatidylglycerol--prolipoprotein diacylglyceryl transferase (281 aa).

Transmembrane regions (helical) follow at residues 23-43, 71-91, 107-127, and 133-153; these read VGPL…LFAW, FVIW…VLFY, WDGG…MILF, and ILVW…LGVV. Residue arginine 154 participates in a 1,2-diacyl-sn-glycero-3-phospho-(1'-sn-glycerol) binding. 3 helical membrane-spanning segments follow: residues 189-209, 217-237, and 247-267; these read LYEA…LVWG, GFVA…VEFF, and LFGG…LLGL.

The protein belongs to the Lgt family.

Its subcellular location is the cell inner membrane. It carries out the reaction L-cysteinyl-[prolipoprotein] + a 1,2-diacyl-sn-glycero-3-phospho-(1'-sn-glycerol) = an S-1,2-diacyl-sn-glyceryl-L-cysteinyl-[prolipoprotein] + sn-glycerol 1-phosphate + H(+). It functions in the pathway protein modification; lipoprotein biosynthesis (diacylglyceryl transfer). Its function is as follows. Catalyzes the transfer of the diacylglyceryl group from phosphatidylglycerol to the sulfhydryl group of the N-terminal cysteine of a prolipoprotein, the first step in the formation of mature lipoproteins. The polypeptide is Phosphatidylglycerol--prolipoprotein diacylglyceryl transferase (Brucella abortus (strain S19)).